Here is a 351-residue protein sequence, read N- to C-terminus: MSRVNATMFDDMDIPRGRFGKPPRKITNVNFWHVVVDEFTEGIVQCMEARERLGLLCTISTNEGSITSFDIHKDMWCQMVIWSAYRFFAIMDKMFSIETITNFTETDVTETGQWRIFYRTWDVRDALKMKQVGPFLPALFSFHLENWTTMLSIGINKGYDRHNTRNMFMTIQSARNVLSGAIEVARYAVVLALPVCEYRTPLGLPDDSIGNAIKTCCTQMQANRLTETGISKDSGHKINDSSEEELYYRTIHDLIKPNREHCISCNIENSMDIDPTIHHRSSNVITLQGTSTYPFGRRPMSRMDVGGLMYQHPYICRNLHLRPPRSRLMNSKILQTFRQSFNRSNPHAYPI.

This is an uncharacterized protein from Gallus gallus (Chicken).